Consider the following 154-residue polypeptide: D-aminoacyl-tRNA deacylase (154 aa).

Positions 142–143 match the Gly-cisPro motif, important for rejection of L-amino acids motif; that stretch reads GP.

This sequence belongs to the DTD family. Homodimer.

It is found in the cytoplasm. The catalysed reaction is glycyl-tRNA(Ala) + H2O = tRNA(Ala) + glycine + H(+). It carries out the reaction a D-aminoacyl-tRNA + H2O = a tRNA + a D-alpha-amino acid + H(+). An aminoacyl-tRNA editing enzyme that deacylates mischarged D-aminoacyl-tRNAs. Also deacylates mischarged glycyl-tRNA(Ala), protecting cells against glycine mischarging by AlaRS. Acts via tRNA-based rather than protein-based catalysis; rejects L-amino acids rather than detecting D-amino acids in the active site. By recycling D-aminoacyl-tRNA to D-amino acids and free tRNA molecules, this enzyme counteracts the toxicity associated with the formation of D-aminoacyl-tRNA entities in vivo and helps enforce protein L-homochirality. The chain is D-aminoacyl-tRNA deacylase from Polaromonas sp. (strain JS666 / ATCC BAA-500).